Reading from the N-terminus, the 324-residue chain is Methyltransferase pytC (324 aa).

Residues methionine 1 to cysteine 28 form a disordered region.

It belongs to the methyltransferase superfamily. LaeA methyltransferase family.

The protein operates within secondary metabolite biosynthesis. Its function is as follows. Methyltransferase; part of the gene cluster that mediates the biosynthesis of pyranterreones, a family of antioxidative compounds. The first step of pyranonigrins biosynthesis is performed by the hybrid PKS-NRPS synthetase pytA that condenses 4 malonyl-CoA units ato the acetyl starter unit by the modular PKS of pytA. The acyl chain is then connected to an L-serine through the amide bond by the modular NRPS of pytA. A tetramic acid is formed and released from the PKS-NRPS pytA to give pyranterreone 5 with the help of the thioesterase pytI. Pyranterreone 5 could be methylated by pytC to afford pyranterreone 6. Both pyranterreones 5 and 6 are subsequently oxidized by the FAD-linked oxidoreductase pytB and the cytochrome P450 monooxygenase pytD to form the fused gamma-pyrone core, resulting in pyranterreones 7 and 11, respectively. The hydroxy group at C-8 of pyranterreones 7 and 11 are dehydrated by the aspartyl protease pytH to form a delta-7 double bond to give pyranterreones 3 and 1, 2 accordingly. The exo-methylene of pyranterreone 3 could be reduced into a pendant methyl by reductase pytE to provide pyranterreone 4, also known as cordylactam. Pyranterreone 4 can be reconverted to pyranterreone 3 through pytB-catalyzed dehydrogenation or further oxidized to pyranterreones 9 and 10. The sequence is that of Methyltransferase pytC from Aspergillus terreus.